Reading from the N-terminus, the 474-residue chain is Synaptotagmin-17 (474 aa).

The interval 54 to 112 (PAQTPPWLVSNRSEDKEGDSDNTTSEPPATPQDTSPDRRRSSSDTSRSTYSLTRRISSL) is disordered. Over residues 96–112 (SDTSRSTYSLTRRISSL) the composition is skewed to low complexity. C2 domains lie at 184–310 (QLGM…HWWK) and 321–455 (ELGE…EQWH).

This sequence belongs to the synaptotagmin family.

The protein resides in the membrane. Its function is as follows. May play a role in dendrite formation by melanocytes. This is Synaptotagmin-17 (syt17) from Xenopus tropicalis (Western clawed frog).